The sequence spans 142 residues: Large ribosomal subunit protein uL11 (142 aa).

This sequence belongs to the universal ribosomal protein uL11 family. Part of the ribosomal stalk of the 50S ribosomal subunit. Interacts with L10 and the large rRNA to form the base of the stalk. L10 forms an elongated spine to which L12 dimers bind in a sequential fashion forming a multimeric L10(L12)X complex. In terms of processing, one or more lysine residues are methylated.

Its function is as follows. Forms part of the ribosomal stalk which helps the ribosome interact with GTP-bound translation factors. This is Large ribosomal subunit protein uL11 from Tolumonas auensis (strain DSM 9187 / NBRC 110442 / TA 4).